We begin with the raw amino-acid sequence, 240 residues long: Probable transcriptional regulatory protein jhp_0149 (240 aa).

It belongs to the TACO1 family.

The protein localises to the cytoplasm. The chain is Probable transcriptional regulatory protein jhp_0149 from Helicobacter pylori (strain J99 / ATCC 700824) (Campylobacter pylori J99).